The chain runs to 172 residues: C-phycocyanin beta chain (172 aa).

The residue at position 72 (N72) is an N4-methylasparagine. (2R,3E)-phycocyanobilin is bound by residues C82 and C153.

This sequence belongs to the phycobiliprotein family. Heterodimer of an alpha and a beta subunit, which further assembles into trimers and the trimers into hexamers. The basic functional unit of phycobiliproteins is a ring-shaped hexamer formed from two back-to-back trimers contacting via the alpha chain subunits. The trimers are composed of alpha/beta subunit heterodimers arranged around a three-fold axis of symmetry. The phycoerythrins also contain a gamma subunit which is located in the center of the hexamer. In terms of processing, contains two covalently linked bilin chromophores.

It is found in the plastid. It localises to the chloroplast thylakoid membrane. Functionally, light-harvesting photosynthetic bile pigment-protein from the phycobiliprotein complex (phycobilisome, PBS). Phycocyanin is the major phycobiliprotein in the PBS rod. In Aglaothamnion neglectum (Red alga), this protein is C-phycocyanin beta chain (cpcB).